A 157-amino-acid chain; its full sequence is UPF0251 protein CLD_3165 (157 aa).

It belongs to the UPF0251 family.

This is UPF0251 protein CLD_3165 from Clostridium botulinum (strain Okra / Type B1).